The sequence spans 572 residues: RNA polymerase sigma factor sigB (572 aa).

The transit peptide at 1 to 39 (MSSCLLPQFKCPPDSFSIHFRTSFCAPKHNKGSVFFQPQ) directs the protein to the chloroplast. The segment at 215–249 (TRQTERKARRAKGLEKTASGIPSVKTGSSPKKKRL) is disordered. Residues 360-373 (DLVQEGCRGLVRGA) carry the Polymerase core binding motif. Residues 530–549 (LQEIGEMMGVSRERVRQIES) constitute a DNA-binding region (H-T-H motif).

Belongs to the sigma-70 factor family. As to expression, highly expressed in cotyledons, to a lesser extent in leaves, sepals and siliques, and barely expressed in roots. Present in seedlings.

Its subcellular location is the plastid. The protein resides in the chloroplast. In terms of biological role, required for the transition of plastids into chloroplasts by coordinating nuclear and chloroplastic genomes under light conditions. Sigma factors are initiation factors that promote the attachment of plastid-encoded RNA polymerase (PEP) to specific initiation sites and are then released. Promotes the biosynthesis of plastid-encoded tRNAs (e.g. trnE-UUC and trnV-UAC). This is RNA polymerase sigma factor sigB (SIGB) from Arabidopsis thaliana (Mouse-ear cress).